The sequence spans 376 residues: Heptahelical transmembrane protein ADIPOR1 (376 aa).

At 1-90 the chain is on the cytoplasmic side; it reads MGEEAAMATM…LSLFSWHNET (90 aa). Positions 20 to 46 are disordered; it reads PAAAPAPAKGGGSKKKRKQQKREEKRK. Residues 91-111 form a helical membrane-spanning segment; sequence INIWTHLLGFVLFFGLTVLHL. The Extracellular portion of the chain corresponds to 112 to 179; sequence GQYFPQVADL…AAAAATTRWP (68 aa). The helical transmembrane segment at 180-200 threads the bilayer; sequence FFVFLAGAMFCLLSSAACHLL. Residues 201–216 lie on the Cytoplasmic side of the membrane; that stretch reads SCHSHRLNLFLIRLDY. The chain crosses the membrane as a helical span at residues 217-237; the sequence is TGIAVMIVVSFFPPIYYIFQC. Residues 238-240 are Extracellular-facing; it reads EPR. A helical transmembrane segment spans residues 241–261; sequence WQVVYLSAITAAGVATVYALM. Over 262–274 the chain is Cytoplasmic; it reads SPRLSAARYRAHR. A helical transmembrane segment spans residues 275–295; sequence ALLFVAMGLSGVVPAAHAVAV. Over 296–303 the chain is Extracellular; that stretch reads NWHEPRRN. A helical transmembrane segment spans residues 304-324; the sequence is VTLAYEGAMAASYLAGTAFYL. Topologically, residues 325–344 are cytoplasmic; sequence TRVPERWRPGMFDLCGHSHQ. The helical transmembrane segment at 345-365 threads the bilayer; sequence IFHALVIAGALAHYAAAIVFI. Residues 366–376 lie on the Extracellular side of the membrane; the sequence is QARDEMGCPAP.

It belongs to the ADIPOR family.

It is found in the membrane. Functionally, may play a role in abiotic stress response. This Oryza sativa subsp. japonica (Rice) protein is Heptahelical transmembrane protein ADIPOR1 (ADIPOR1).